Consider the following 367-residue polypeptide: Chorismate synthase (367 aa).

2 residues coordinate NADP(+): R48 and R54. Residues R125–S127, N238–A239, G278, K293–S297, and R319 contribute to the FMN site.

The protein belongs to the chorismate synthase family. In terms of assembly, homotetramer. FMNH2 serves as cofactor.

It carries out the reaction 5-O-(1-carboxyvinyl)-3-phosphoshikimate = chorismate + phosphate. The protein operates within metabolic intermediate biosynthesis; chorismate biosynthesis; chorismate from D-erythrose 4-phosphate and phosphoenolpyruvate: step 7/7. Functionally, catalyzes the anti-1,4-elimination of the C-3 phosphate and the C-6 proR hydrogen from 5-enolpyruvylshikimate-3-phosphate (EPSP) to yield chorismate, which is the branch point compound that serves as the starting substrate for the three terminal pathways of aromatic amino acid biosynthesis. This reaction introduces a second double bond into the aromatic ring system. The chain is Chorismate synthase from Xanthomonas campestris pv. campestris (strain B100).